The primary structure comprises 103 residues: MYAVIKTGGKQYRVAAGEKIKVEQIAADVGQEVVIDQVLAVGNGAEIKVGTPLVSGASVKATVVAHGKHDKVHIFKMRRRKHYQKRQGHRQQFTELQIVAIAA.

Belongs to the bacterial ribosomal protein bL21 family. In terms of assembly, part of the 50S ribosomal subunit. Contacts protein L20.

This protein binds to 23S rRNA in the presence of protein L20. This chain is Large ribosomal subunit protein bL21, found in Delftia acidovorans (strain DSM 14801 / SPH-1).